We begin with the raw amino-acid sequence, 362 residues long: Peptide chain release factor 1 (362 aa).

Glutamine 237 is modified (N5-methylglutamine). A compositionally biased stretch (basic and acidic residues) spans 282–296 (QQEEDKRRAEADSTR). Positions 282-304 (QQEEDKRRAEADSTRRSILSTGD) are disordered.

It belongs to the prokaryotic/mitochondrial release factor family. Methylated by PrmC. Methylation increases the termination efficiency of RF1.

Its subcellular location is the cytoplasm. Functionally, peptide chain release factor 1 directs the termination of translation in response to the peptide chain termination codons UAG and UAA. The chain is Peptide chain release factor 1 from Tolumonas auensis (strain DSM 9187 / NBRC 110442 / TA 4).